Consider the following 726-residue polypeptide: Biotin--protein ligase (726 aa).

The interval 28-98 (EVKDQVSNKQ…SDRGGGPVEH (71 aa)) is disordered. Residues 43-75 (PKPEPSLEIKPEQDGMEHVGRDDPKALGEEPKQ) show a composition bias toward basic and acidic residues. Phosphoserine occurs at positions 147 and 299. Positions 463–652 (KQLGKVILFA…VLEKLIKEFQ (190 aa)) constitute a BPL/LPL catalytic domain.

It belongs to the biotin--protein ligase family. In terms of assembly, monomer. As to expression, widely expressed. Mostly expressed in muscle, placenta and to a lower extent in the brain, kidney, pancreas, liver and lung.

The protein localises to the cytoplasm. It localises to the mitochondrion. It carries out the reaction apo-[methylmalonyl-CoA:pyruvate carboxytransferase] + biotin + ATP = holo-[methylmalonyl-CoA:pyruvate carboxytransferase] + AMP + diphosphate + H(+). It catalyses the reaction apo-[propionyl-CoA:carbon-dioxide ligase (ADP-forming)] + biotin + ATP = holo-[propionyl-CoA:carbon-dioxide ligase (ADP-forming)] + AMP + diphosphate + H(+). The catalysed reaction is apo-[3-methylcrotonoyl-CoA:carbon-dioxide ligase (ADP-forming)] + biotin + ATP = holo-[3-methylcrotonoyl-CoA:carbon-dioxide ligase (ADP-forming)] + AMP + diphosphate + H(+). The enzyme catalyses biotin + L-lysyl-[protein] + ATP = N(6)-biotinyl-L-lysyl-[protein] + AMP + diphosphate + H(+). In terms of biological role, biotin--protein ligase catalyzing the biotinylation of the 4 biotin-dependent carboxylases acetyl-CoA-carboxylase, pyruvate carboxylase, propionyl-CoA carboxylase, and methylcrotonyl-CoA carboxylase. In Homo sapiens (Human), this protein is Biotin--protein ligase.